The primary structure comprises 68 residues: Large ribosomal subunit protein bL35 (68 aa).

The protein belongs to the bacterial ribosomal protein bL35 family.

This is Large ribosomal subunit protein bL35 from Persephonella marina (strain DSM 14350 / EX-H1).